A 180-amino-acid polypeptide reads, in one-letter code: MYKILAGVGSIVRTLFMVFTHGFRKRDTILYPEVPAEEIVPPRYRGRIILTRDPDGEERCVACNLCAVACPVGCISLQKAEKEDGRWYPEFFRINFSRCIFCGMCEEACPTTAIQLTPDFELGEYVRQDLVYEKENLLISGPGKYPDYNFYRVTGMAINGKEKGQAQKESAPIDVRSLLP.

4Fe-4S ferredoxin-type domains are found at residues 50–80 (LTRDPDGEERCVACNLCAVACPVGCISLQKA) and 90–119 (EFFRINFSRCIFCGMCEEACPTTAIQLTPD). [4Fe-4S] cluster-binding residues include Cys-60, Cys-63, Cys-66, Cys-70, Cys-99, Cys-102, Cys-105, and Cys-109.

This sequence belongs to the complex I 23 kDa subunit family. In terms of assembly, NDH-1 is composed of 14 different subunits. Subunits NuoA, H, J, K, L, M, N constitute the membrane sector of the complex. The cofactor is [4Fe-4S] cluster.

It is found in the cell inner membrane. The enzyme catalyses a quinone + NADH + 5 H(+)(in) = a quinol + NAD(+) + 4 H(+)(out). In terms of biological role, NDH-1 shuttles electrons from NADH, via FMN and iron-sulfur (Fe-S) centers, to quinones in the respiratory chain. The immediate electron acceptor for the enzyme in this species is believed to be ubiquinone. Couples the redox reaction to proton translocation (for every two electrons transferred, four hydrogen ions are translocated across the cytoplasmic membrane), and thus conserves the redox energy in a proton gradient. The polypeptide is NADH-quinone oxidoreductase subunit I (Acinetobacter baumannii (strain ACICU)).